We begin with the raw amino-acid sequence, 550 residues long: Methionine--tRNA ligase (550 aa).

A 'HIGH' region motif is present at residues 13 to 23; the sequence is PYANGPLHFGH. Zn(2+) is bound by residues cysteine 145, cysteine 148, cysteine 158, and cysteine 161. Residues 331-335 carry the 'KMSKS' region motif; the sequence is QFSKS. Residue lysine 334 coordinates ATP.

This sequence belongs to the class-I aminoacyl-tRNA synthetase family. MetG type 1 subfamily. As to quaternary structure, monomer. Zn(2+) serves as cofactor.

It localises to the cytoplasm. It carries out the reaction tRNA(Met) + L-methionine + ATP = L-methionyl-tRNA(Met) + AMP + diphosphate. In terms of biological role, is required not only for elongation of protein synthesis but also for the initiation of all mRNA translation through initiator tRNA(fMet) aminoacylation. The sequence is that of Methionine--tRNA ligase from Chlamydia trachomatis serovar A (strain ATCC VR-571B / DSM 19440 / HAR-13).